The chain runs to 631 residues: Mu-like prophage FluMu protein gp42 (631 aa).

The next 2 membrane-spanning stretches (helical) occupy residues 56–76 (LGNI…TMVG) and 385–405 (GLAD…PVYV). The interval 425 to 453 (IEDGRDKDKKTQKKNKPPRPKRGRGSVRS) is disordered. Basic residues predominate over residues 434 to 449 (KTQKKNKPPRPKRGRG). 3 helical membrane-spanning segments follow: residues 455 to 475 (VAAV…VTTA), 495 to 515 (SKAV…TVLM), and 543 to 563 (ALIP…GWLG).

The protein to phage Mu protein gp42.

The protein resides in the cell membrane. In Haemophilus influenzae (strain ATCC 51907 / DSM 11121 / KW20 / Rd), this protein is Mu-like prophage FluMu protein gp42.